A 402-amino-acid polypeptide reads, in one-letter code: Eukaryotic initiation factor 4A (402 aa).

Residues 29 to 57 carry the Q motif motif; the sequence is ESFDDMELKEELLRGIYGFGFEKPSAIQK. The Helicase ATP-binding domain occupies 60–230; sequence IVPCTTGKDV…NRFMRNPIRI (171 aa). 73 to 80 is an ATP binding site; that stretch reads AQSGTGKT. A DEAD box motif is present at residues 178-181; sequence DEAD. The region spanning 241 to 402 is the Helicase C-terminal domain; it reads GIRQFYINVQ…EMPESIADLI (162 aa).

The protein belongs to the DEAD box helicase family. eIF4A subfamily. As to quaternary structure, eIF4F is a multi-subunit complex, the composition of which varies with external and internal environmental conditions. It is composed of at least EIF4A, EIF4E and EIF4G.

It carries out the reaction ATP + H2O = ADP + phosphate + H(+). Its function is as follows. ATP-dependent RNA helicase which is a subunit of the eIF4F complex involved in cap recognition and is required for mRNA binding to ribosome. In the current model of translation initiation, eIF4A unwinds RNA secondary structures in the 5'-UTR of mRNAs which is necessary to allow efficient binding of the small ribosomal subunit, and subsequent scanning for the initiator codon. The polypeptide is Eukaryotic initiation factor 4A (inf-1) (Caenorhabditis elegans).